A 387-amino-acid polypeptide reads, in one-letter code: Phosphoglycerate kinase (387 aa).

Substrate contacts are provided by residues D21–N23, R36, H59–R62, R113, and R146. ATP is bound by residues K197, E314, and G340 to T343.

This sequence belongs to the phosphoglycerate kinase family. Monomer.

The protein localises to the cytoplasm. It carries out the reaction (2R)-3-phosphoglycerate + ATP = (2R)-3-phospho-glyceroyl phosphate + ADP. It functions in the pathway carbohydrate degradation; glycolysis; pyruvate from D-glyceraldehyde 3-phosphate: step 2/5. This Photorhabdus laumondii subsp. laumondii (strain DSM 15139 / CIP 105565 / TT01) (Photorhabdus luminescens subsp. laumondii) protein is Phosphoglycerate kinase.